Consider the following 186-residue polypeptide: Ribosome-recycling factor (186 aa).

This sequence belongs to the RRF family.

It localises to the cytoplasm. In terms of biological role, responsible for the release of ribosomes from messenger RNA at the termination of protein biosynthesis. May increase the efficiency of translation by recycling ribosomes from one round of translation to another. This is Ribosome-recycling factor from Chlorobium luteolum (strain DSM 273 / BCRC 81028 / 2530) (Pelodictyon luteolum).